Consider the following 370-residue polypeptide: MLKPGIRSVQKRFITETVVRSTQPSVSRRRKTTHFTDKLNKGPSFEDFVNGNAQKFTLDPLEKARQNSEEVQRLPTWLKVPIAKGSNFHKLKNDVKELKLSTVCEEAKCPNIGECWGGGDKSKATATIMLLGDTCTRGCRFCSVKTNRKPSAPDPTEPENTAEAISRWGLGYVVLTTVDRDDLVDGGAYHLAETVQKIKQKAPNILVETLSGDFRGDLEMVKVMALSGLDVYAHNMETVEALTPHVRDRRATYRQSLSVLECAKKTVPTLVTKTSVMLGLGETDEQVLQTMKDLRAIGCDVITFGQYMRPTKRHMKVVEYVTPEKFDYWKQKALELGFLYCASGPLVRSSYKAGESFIENVLRGRSRARI.

[4Fe-4S] cluster is bound by residues cysteine 104, cysteine 109, cysteine 115, cysteine 135, cysteine 139, cysteine 142, and serine 350. The 222-residue stretch at 118–339 (GGDKSKATAT…KQKALELGFL (222 aa)) folds into the Radical SAM core domain.

Belongs to the radical SAM superfamily. Lipoyl synthase family. The cofactor is [4Fe-4S] cluster.

Its subcellular location is the mitochondrion. The catalysed reaction is [[Fe-S] cluster scaffold protein carrying a second [4Fe-4S](2+) cluster] + N(6)-octanoyl-L-lysyl-[protein] + 2 oxidized [2Fe-2S]-[ferredoxin] + 2 S-adenosyl-L-methionine + 4 H(+) = [[Fe-S] cluster scaffold protein] + N(6)-[(R)-dihydrolipoyl]-L-lysyl-[protein] + 4 Fe(3+) + 2 hydrogen sulfide + 2 5'-deoxyadenosine + 2 L-methionine + 2 reduced [2Fe-2S]-[ferredoxin]. Its pathway is protein modification; protein lipoylation via endogenous pathway; protein N(6)-(lipoyl)lysine from octanoyl-[acyl-carrier-protein]: step 2/2. In terms of biological role, catalyzes the radical-mediated insertion of two sulfur atoms into the C-6 and C-8 positions of the octanoyl moiety bound to the lipoyl domains of lipoate-dependent enzymes, thereby converting the octanoylated domains into lipoylated derivatives. This Kluyveromyces lactis (strain ATCC 8585 / CBS 2359 / DSM 70799 / NBRC 1267 / NRRL Y-1140 / WM37) (Yeast) protein is Lipoyl synthase, mitochondrial.